The following is a 190-amino-acid chain: Scytalone dehydratase-like protein Arp1 (190 aa).

A substrate-binding site is contributed by tyrosine 67. Active-site residues include histidine 102 and histidine 127. Position 148 (asparagine 148) interacts with substrate.

Belongs to the scytalone dehydratase family. In terms of assembly, homotrimer. Each subunit contains an active site, located in the central part of the hydrophobic core of the monomer, which functions independently.

Scytalone dehydratase-like protein; part of the Pks2 gene cluster that mediates the formation of infectious structures (appressoria), enabling these fungi to kill insects faster. The product of the Pks2 gene cluster is different from the one of Pks1 and has still not been identified. In Metarhizium anisopliae (strain ARSEF 549), this protein is Scytalone dehydratase-like protein Arp1.